The sequence spans 859 residues: Homeobox-leucine zipper protein HOX32 (859 aa).

Residues 7–31 (AAVHGVGRQDRSSPGGGGAPQVDTG) are disordered. A DNA-binding region (homeobox) is located at residues 29-92 (DTGKYVRYTP…NRRCREKQRK (64 aa)). Residues 100 to 129 (VNRKLTAMNKLLMEENDRLQKQVSRLVYEN) are a coiled coil. Polar residues predominate over residues 146–164 (TSCESVVTSGQHHQQQNPA). Residues 146–172 (TSCESVVTSGQHHQQQNPAATRPQRDA) are disordered. In terms of domain architecture, START spans 171–393 (DANNPAGLLA…LRHIRQIAHE (223 aa)).

Belongs to the HD-ZIP homeobox family. Class III subfamily. As to expression, expressed in seedlings, roots, stems, leaf sheaths and blades and panicles.

The protein localises to the nucleus. Functionally, probable transcription factor. The chain is Homeobox-leucine zipper protein HOX32 (HOX32) from Oryza sativa subsp. japonica (Rice).